The sequence spans 612 residues: Probable serine/threonine-protein kinase WNK4 (612 aa).

A Protein kinase domain is found at 25–282 (IRYNEVLGRG…AKELLQDPFL (258 aa)). ATP is bound by residues 105-108 (TELF) and K155. The Proton acceptor role is filled by D172.

It belongs to the protein kinase superfamily. Ser/Thr protein kinase family. WNK subfamily.

It catalyses the reaction L-seryl-[protein] + ATP = O-phospho-L-seryl-[protein] + ADP + H(+). The enzyme catalyses L-threonyl-[protein] + ATP = O-phospho-L-threonyl-[protein] + ADP + H(+). The chain is Probable serine/threonine-protein kinase WNK4 (WNK4) from Oryza sativa subsp. japonica (Rice).